Here is a 136-residue protein sequence, read N- to C-terminus: 14 kDa fusion protein (136 aa).

Residues 22–50 are disordered; that stretch reads EAWTTSRSSTGSANPSASRKPARYPRIHA. Positions 24-38 are enriched in polar residues; it reads WTTSRSSTGSANPSA. Asn86 is a glycosylation site (N-linked (GlcNAc...) asparagine; by host).

The protein belongs to the poxviruses fusion protein family. Homotrimer, covalently linked.

The protein resides in the virion membrane. This protein appears to play an important role in virus penetration at the level of cell fusion. The N-terminal proximal region is essential for fusion ability. Essential in fusing the outermost of the two Golgi-derived membranes enveloping the virus with the plasma membrane, and in its subsequent release extracellularly. The chain is 14 kDa fusion protein from Vaccinia virus (strain WR 65-16) (VACV).